Consider the following 239-residue polypeptide: Aspartate/glutamate leucyltransferase (239 aa).

It belongs to the R-transferase family. Bpt subfamily.

The protein resides in the cytoplasm. It carries out the reaction N-terminal L-glutamyl-[protein] + L-leucyl-tRNA(Leu) = N-terminal L-leucyl-L-glutamyl-[protein] + tRNA(Leu) + H(+). It catalyses the reaction N-terminal L-aspartyl-[protein] + L-leucyl-tRNA(Leu) = N-terminal L-leucyl-L-aspartyl-[protein] + tRNA(Leu) + H(+). Functions in the N-end rule pathway of protein degradation where it conjugates Leu from its aminoacyl-tRNA to the N-termini of proteins containing an N-terminal aspartate or glutamate. The polypeptide is Aspartate/glutamate leucyltransferase (Campylobacter jejuni subsp. jejuni serotype O:23/36 (strain 81-176)).